The primary structure comprises 239 residues: MNDPFIVALDFSSGKEVRTFLQPFSHTSLFVKVGMELYYQEGPAIIHSLKEQGHRIFLDLKLHDIPNTVKRAMQGLARLEVDLVNVHAAGGTRMMEAALEGLEAGTPNGARRPYCIAVTQLTSTSEQMLHNELWIGRTMEETVLHYAALAKQSGLDGVVCSAKEVPLIRKHCGEAFLTVTPGIRFADDEKNDQVRVVTPYEAKKLGASFIVIGRSITRAENPIAAYERLQQEWKGEEKK.

Residues D10, K32, 59–68 (DLKLHDIPNT), T122, R184, Q193, G213, and R214 each bind substrate. The active-site Proton donor is the K61.

It belongs to the OMP decarboxylase family. Type 1 subfamily. In terms of assembly, homodimer.

It catalyses the reaction orotidine 5'-phosphate + H(+) = UMP + CO2. Its pathway is pyrimidine metabolism; UMP biosynthesis via de novo pathway; UMP from orotate: step 2/2. Its function is as follows. Catalyzes the decarboxylation of orotidine 5'-monophosphate (OMP) to uridine 5'-monophosphate (UMP). This is Orotidine 5'-phosphate decarboxylase from Geobacillus sp. (strain WCH70).